The sequence spans 2294 residues: MKRHPLKSWIFELREILREIKNSHYFLDSWTKFDSVGSFTHIFFHQERFMKLFDPRIWSILLSRDSQGLTSNRYFTIKGVVLLAVAVLIYRINSRNMVERKNIYLMGLLPIPMNSIGPRNDALEESFGSSNINRLIVSLLYLPKGKKISESCFMDPKESTLVLPITKKCIMPESNWGSRWRRNQIGKRRDSSCKISNETVAGIEISFKEKDLKYLESPFVSYTDDPIRKDHDWELFDRLSPRKKRNIINLNSGQLFEILVKHWICYLMSAFREKRPIEVEGFFKQQGAGSTIQSNDIERVSHLLSRNKWGISLQNCAQFHMWQFRQDLFVSWGKNPHELDFLRNVSRENWIWLDSVRLVNKDRFFSKVRNVSSNMQYDSTRSIFVQVTDSSQLKGSSDQSRDHLDSISHEDSEYHTLINQSEIQQLKERSILWDPSFFQTERTEIELDRFPKRLSGDSSMSRLFTEREKPMIIHRLPEEIEEFLGNPTRSIRSFFSDRWSELHLGSNPTEGSTRDQKLLKKQQDFSFVPSRRSENKEMVDIFRIITYLQNTVSIHPILSDPGCDMVPKDEPDMDSSNKISFLNQNSFFYLFHLFHDRNRGGYTLHHDFESEEKFQEMADLLTLSITEPDLVYHKGSAFSIDSYRLDQKKFLNEVFNSRDESKKKSLLVLPPIFYEENESFYQRIRKKWVQISCGNALEDPKQKRVVFASNNIMKAVNQYRFIQNLIQIQYSTHGYIRNVSNQFFKRSDRNFEYGIQRDQIGNDTLNHRTIMKYTINQHLSNLKKSQKKWFDPLISRTERSTNRYPDAYRYKWSKGSKNLQEHLEHFVAEQKSLFQVVFDRLRINQNSIDWSEVIDKQYFSKSLRFFLSKSLLFLSKSLPFFFVSIGNIPSHRSEIHIYELKGPNDQLCNQLLESIGVQIVHLNKWKSFLLDDHDTSQKSKFLINGGRISPFLFNKIPKWMIESFHTRNNRRKSFDNADSYFSMISHDRDNWLNPAKPFHRSSLISSFYKANRLRFLNNPHHFWFYCNKRFPFYVEKARINKYDLTYGQFLNILFIRKKIFSLCVGKGKKKHVFGERDTISPIESQVSNIFIPNDFPQSGDETYNLYKSFHFPIRPAPFVRRALYSIADISGTPLTEGQIVHFERTYCQPLSDMNPSDSEGKNLHQYFNFNSNMGLIHTPYSEKYLPSEKRKKRSLCLKKCVEKRQMYRTFQRDSTFSNLSKLNLFQTYMPWFLTSAGCKYLNLTLLDTFSDLLPILSISQKWVSIFHDIMRGSDISWPIPQKKLWAILPQWNLISEISSKCLHDLLLSEETIRRHNESPVPLIWAHLRSPNARELLYSILFFLLVAGYLVRTHLLFVSRASSELQTEFEKIKSLMIPSYMIELRKLLDGYPTSERNSFWLKNLFLVALKQFGDSLEEIRGSASGGNMLLGGGPAYGVKSIRSKKKYWNINLVDIMDLISIIPNPINRITFSRNTGHLSRTSKEIYSLIRKRKNVNGDWIDDKIESWVANSDSIDDEEREFLVQFSTLTTEKRIDQILLSLTHSDHLSKNDSGYQMIEQPGSVYLRYLVDIHKKNLMNYEFNRSCIAERRIFLAHSQTITYSQTSCGANSFHFPSPGKPFSLRLALSPSRGILVIGSIGTGRSYLVKYLATNSYVPFITVFPNKFLDDKPKGYLIDDIDIDDSDDIDDSDDIDDSDDIDDDLDTELLTMTNALTMYITPKIDRFDITLPFELAKAMSPCIIWIPNIHDLYVNESNYLSLGLLVNHLSRDCERCSTRNILVIASTHIPQKVDPALIAPNKSNTCIKIRRLLIPQQRKHFFTLSYTRGFYLEKKMFHTNGFGSITMGSNARDLVALTNEALSISITQKKSIIDTNTIRSALHKQTWDLRSQVRSVQDHGILFYQIGRAIAQNVLLSNCPIDPISIYMKKKSCKEGDSYLYKWYFELGTSMKKLTILLYLLSCSAGSVAQDLWSPPGPDEKNGITSYGFVENDSDLVHGLLEVEGVLVGSSPTEKDCSQFYKDRVTLLLRSEPRNPFDMMQNGSYSIVDQRFLYEKYELEFEEGGGEGALDPQQLEEDLFNHIVWAPRIWHPCGNLFDCIERPNELGFPYWARSFRGKRIIYHKEDELEENDSEFLQSGTMQYQTRDRSSKEQGFFRISQFIWDPADPFLFLFKDQPFVSVFSRREFFADQEMPKGLLTSQTNSPTSIYKRWFIKNTQEKHFELLIHRQRWLRTNSSLSNGSFRSNTLSESYQYLSNLFLSNGTLLDQMTKTLLRKRWLFPDEMKHLIHVTGERFPIP.

1635–1642 is an ATP binding site; it reads GSIGTGRS.

Belongs to the Ycf2 family.

The protein localises to the plastid. It is found in the chloroplast stroma. In terms of biological role, probable ATPase of unknown function. Its presence in a non-photosynthetic plant (Epifagus virginiana) and experiments in tobacco indicate that it has an essential function which is probably not related to photosynthesis. The polypeptide is Protein Ycf2 (Ranunculus macranthus (Large buttercup)).